Here is a 376-residue protein sequence, read N- to C-terminus: UDP-N-acetylglucosamine--N-acetylmuramyl-(pentapeptide) pyrophosphoryl-undecaprenol N-acetylglucosamine transferase (376 aa).

Residues 11–13, Asn117, Arg160, Ser208, and Gln310 contribute to the UDP-N-acetyl-alpha-D-glucosamine site; that span reads TGG.

Belongs to the glycosyltransferase 28 family. MurG subfamily.

The protein resides in the cell inner membrane. It carries out the reaction di-trans,octa-cis-undecaprenyl diphospho-N-acetyl-alpha-D-muramoyl-L-alanyl-D-glutamyl-meso-2,6-diaminopimeloyl-D-alanyl-D-alanine + UDP-N-acetyl-alpha-D-glucosamine = di-trans,octa-cis-undecaprenyl diphospho-[N-acetyl-alpha-D-glucosaminyl-(1-&gt;4)]-N-acetyl-alpha-D-muramoyl-L-alanyl-D-glutamyl-meso-2,6-diaminopimeloyl-D-alanyl-D-alanine + UDP + H(+). It participates in cell wall biogenesis; peptidoglycan biosynthesis. Functionally, cell wall formation. Catalyzes the transfer of a GlcNAc subunit on undecaprenyl-pyrophosphoryl-MurNAc-pentapeptide (lipid intermediate I) to form undecaprenyl-pyrophosphoryl-MurNAc-(pentapeptide)GlcNAc (lipid intermediate II). The sequence is that of UDP-N-acetylglucosamine--N-acetylmuramyl-(pentapeptide) pyrophosphoryl-undecaprenol N-acetylglucosamine transferase from Rickettsia peacockii (strain Rustic).